A 133-amino-acid polypeptide reads, in one-letter code: Type III secretion protein HrcQb (133 aa).

A compositionally biased stretch (acidic residues) spans 1–21 (MSTEDLYQDDVEMLDDYEEPV). The disordered stretch occupies residues 1–60 (MSTEDLYQDDVEMLDDYEEPVPEQADQQQRDDEYAEHAFGYADSDAEHEEQSGDHHESPM). A compositionally biased stretch (basic and acidic residues) spans 49–59 (EEQSGDHHESP).

Belongs to the FliN/MopA/SpaO family. In terms of assembly, homotetramer. The four monomers assemble into two tightly bound homodimers. Interacts with HrcQa.

The protein localises to the cytoplasm. Functionally, component of the type III secretion system, which is required for effector protein delivery, parasitism, and pathogenicity. Probably participates in the formation of a C-ring-like assembly along with HrcQa. The polypeptide is Type III secretion protein HrcQb (hrcQb) (Pseudomonas syringae pv. syringae).